The chain runs to 577 residues: Beta-glucosidase 30 (577 aa).

Residues 1–23 form the signal peptide; sequence MAKGSWFFIILFIISMLENMINS. A beta-D-glucoside is bound by residues Gln45, His148, and 193 to 194; that span reads NE. Glu194 (proton donor) is an active-site residue. A disulfide bond links Cys213 and Cys221. Asn328 is a glycosylation site (N-linked (GlcNAc...) asparagine). A beta-D-glucoside is bound at residue Tyr338. N-linked (GlcNAc...) asparagine glycosylation occurs at Asn368. Residues Glu410, Trp460, 467-468, and Phe476 contribute to the a beta-D-glucoside site; that span reads EW. Glu410 acts as the Nucleophile in catalysis. N-linked (GlcNAc...) asparagine glycans are attached at residues Asn524 and Asn544.

This sequence belongs to the glycosyl hydrolase 1 family.

It catalyses the reaction Hydrolysis of terminal, non-reducing beta-D-glucosyl residues with release of beta-D-glucose.. The protein is Beta-glucosidase 30 of Arabidopsis thaliana (Mouse-ear cress).